Here is a 297-residue protein sequence, read N- to C-terminus: Large ribosomal subunit protein uL10 (297 aa).

The protein belongs to the universal ribosomal protein uL10 family. Part of the 50S ribosomal subunit. Forms part of the ribosomal stalk which helps the ribosome interact with GTP-bound translation factors. Forms a heptameric L10(L12)2(L12)2(L12)2 complex, where L10 forms an elongated spine to which the L12 dimers bind in a sequential fashion.

In terms of biological role, forms part of the ribosomal stalk, playing a central role in the interaction of the ribosome with GTP-bound translation factors. The sequence is that of Large ribosomal subunit protein uL10 from Methanococcus voltae.